We begin with the raw amino-acid sequence, 254 residues long: Phosphoglycerate mutase 1 (254 aa).

Residues 10–17 and 23–24 each bind substrate; these read RHGESAWN and SG. The active-site Tele-phosphohistidine intermediate is H11. Residues S14 and S23 each carry the phosphoserine modification. Y26 is modified (phosphotyrosine). S31 is subject to Phosphoserine. Substrate-binding positions include R62, 89 to 92, and K100; that span reads ERHY. The Proton donor/acceptor role is filled by E89. Residue K106 is modified to N6-acetyllysine. 116–117 contributes to the substrate binding site; that stretch reads RR. S118 is modified (phosphoserine). Position 187–188 (187–188) interacts with substrate; it reads GN. An N6-acetyllysine; alternate modification is found at K251. An N6-succinyllysine; alternate modification is found at K251. Residues K253 and K254 each carry the N6-acetyllysine modification.

This sequence belongs to the phosphoglycerate mutase family. BPG-dependent PGAM subfamily. As to quaternary structure, homodimer. In terms of processing, acetylated at Lys-253, Lys-253 and Lys-254 under high glucose condition. Acetylation increases catalytic activity. Under glucose restriction SIRT1 levels dramatically increase and it deacetylates the enzyme.

It catalyses the reaction (2R)-2-phosphoglycerate = (2R)-3-phosphoglycerate. The enzyme catalyses (2R)-3-phospho-glyceroyl phosphate = (2R)-2,3-bisphosphoglycerate + H(+). Catalyzes the interconversion of 2-phosphoglycerate and 3-phosphoglyceratea crucial step in glycolysis, by using 2,3-bisphosphoglycerate. Also catalyzes the interconversion of (2R)-2,3-bisphosphoglycerate and (2R)-3-phospho-glyceroyl phosphate. The polypeptide is Phosphoglycerate mutase 1 (Pongo abelii (Sumatran orangutan)).